Here is a 257-residue protein sequence, read N- to C-terminus: Dihydroorotate dehydrogenase B (NAD(+)), electron transfer subunit (257 aa).

In terms of domain architecture, FAD-binding FR-type spans 2–102 (IGRERMTVAS…LGPLGNGFPL (101 aa)). FAD contacts are provided by residues 53 to 56 (RPLS), 70 to 72 (IYR), and 77 to 78 (GT). Cys221, Cys226, Cys229, and Cys244 together coordinate [2Fe-2S] cluster.

Belongs to the PyrK family. As to quaternary structure, heterotetramer of 2 PyrK and 2 PyrD type B subunits. [2Fe-2S] cluster serves as cofactor. FAD is required as a cofactor.

It functions in the pathway pyrimidine metabolism; UMP biosynthesis via de novo pathway; orotate from (S)-dihydroorotate (NAD(+) route): step 1/1. In terms of biological role, responsible for channeling the electrons from the oxidation of dihydroorotate from the FMN redox center in the PyrD type B subunit to the ultimate electron acceptor NAD(+). The protein is Dihydroorotate dehydrogenase B (NAD(+)), electron transfer subunit of Bacillus caldolyticus.